The following is a 332-amino-acid chain: MSEPVLMDRFARKVDYLRMSVTDRCDFRCVYCMAEEMTFLPRQQILSLEEILQVAERFVALGTRKIRLTGGEPLVRSGVVGLCEKIAALPGLRELCMTTNGSQLDKLAAPLFKAGVTRLNISLDSLDPQRFRELTRTGDLHKVIAGIDAANAAGFVHTKLNCVVMHGRNDHEINDLLAFAIDRNLDVSFIEEMPLGIISEHSRAESFYSSDQVRERIAERYTLVPSTDSTQGPSRYWRLAEAPGIRIGFISPHSHNFCGTCNRVRLTVEGRLLLCLGNEHSVDLKAVLRANPGQPEKLEKAIIDAMQIKPWSHNFTHDDGVQVVRFMNMTGG.

The 212-residue stretch at 9–220 (RFARKVDYLR…DQVRERIAER (212 aa)) folds into the Radical SAM core domain. Arginine 18 contacts GTP. [4Fe-4S] cluster contacts are provided by cysteine 25 and cysteine 29. Tyrosine 31 is an S-adenosyl-L-methionine binding site. Cysteine 32 contributes to the [4Fe-4S] cluster binding site. Arginine 67 serves as a coordination point for GTP. Glycine 71 contacts S-adenosyl-L-methionine. Threonine 98 is a binding site for GTP. Serine 122 serves as a coordination point for S-adenosyl-L-methionine. Residue lysine 159 participates in GTP binding. Methionine 193 lines the S-adenosyl-L-methionine pocket. 2 residues coordinate [4Fe-4S] cluster: cysteine 258 and cysteine 261. GTP is bound at residue 263–265 (RVR). Residue cysteine 275 participates in [4Fe-4S] cluster binding.

It belongs to the radical SAM superfamily. MoaA family. Monomer and homodimer. Requires [4Fe-4S] cluster as cofactor.

It catalyses the reaction GTP + AH2 + S-adenosyl-L-methionine = (8S)-3',8-cyclo-7,8-dihydroguanosine 5'-triphosphate + 5'-deoxyadenosine + L-methionine + A + H(+). The protein operates within cofactor biosynthesis; molybdopterin biosynthesis. Catalyzes the cyclization of GTP to (8S)-3',8-cyclo-7,8-dihydroguanosine 5'-triphosphate. In Pseudomonas savastanoi pv. phaseolicola (strain 1448A / Race 6) (Pseudomonas syringae pv. phaseolicola (strain 1448A / Race 6)), this protein is GTP 3',8-cyclase.